The following is a 368-amino-acid chain: DnaJ homolog subfamily C member 25 (368 aa).

Residues 25 to 47 (MQPRLFVLVALSVLLLSGRAGAL) form a helical membrane-spanning segment. A J domain is found at 57–132 (VCYDVLGVSR…ETRKDYDYML (76 aa)). A run of 2 helical transmembrane segments spans residues 158–178 (IVIL…WWSS) and 252–272 (ILLF…SWYV).

It belongs to the DNAJC25 family.

The protein resides in the membrane. The sequence is that of DnaJ homolog subfamily C member 25 (dnajc25) from Xenopus tropicalis (Western clawed frog).